The chain runs to 256 residues: MSTTLTNKNVIFVAGLGGIGLDTSKELVKRDLKNLVILDRIDNPAAIAELKAINPKVTVTFYPYDVTVPITETTKLLKTIFAKVKTVDILINGAGILDDHQIERTIAVNYTGLVNTTTAILDFWDKRKGGPGGIICNIGSVTGFNAIYQVPVYSGTKAAVVNFTSSLAKLAPITGVTAYTVNPGITRTTLVHKFNSWLDVEPLVSEKLLAHPTQPSQACAENFVKAIELNKNGAIWKLDRGTLEPIQWTKHWDSGI.

12-35 (FVAGLGGIGLDTSKELVKRDLKNL) serves as a coordination point for NAD(+). Ser140 is a binding site for substrate. Residue Tyr153 is the Proton acceptor of the active site.

This sequence belongs to the short-chain dehydrogenases/reductases (SDR) family. As to quaternary structure, homodimer.

The catalysed reaction is a primary alcohol + NAD(+) = an aldehyde + NADH + H(+). It catalyses the reaction a secondary alcohol + NAD(+) = a ketone + NADH + H(+). This Drosophila tsacasi (Fruit fly) protein is Alcohol dehydrogenase (Adh).